A 179-amino-acid chain; its full sequence is Large ribosomal subunit protein uL5 (179 aa).

This sequence belongs to the universal ribosomal protein uL5 family. As to quaternary structure, part of the 50S ribosomal subunit; part of the 5S rRNA/L5/L18/L25 subcomplex. Contacts the 5S rRNA and the P site tRNA. Forms a bridge to the 30S subunit in the 70S ribosome.

In terms of biological role, this is one of the proteins that bind and probably mediate the attachment of the 5S RNA into the large ribosomal subunit, where it forms part of the central protuberance. In the 70S ribosome it contacts protein S13 of the 30S subunit (bridge B1b), connecting the 2 subunits; this bridge is implicated in subunit movement. Contacts the P site tRNA; the 5S rRNA and some of its associated proteins might help stabilize positioning of ribosome-bound tRNAs. This is Large ribosomal subunit protein uL5 from Paraburkholderia phymatum (strain DSM 17167 / CIP 108236 / LMG 21445 / STM815) (Burkholderia phymatum).